The chain runs to 313 residues: Olfactory receptor 4M1 (313 aa).

Over 1 to 25 (MEPANDTTVTEFILTGLSQTREVQL) the chain is Extracellular. N5 carries N-linked (GlcNAc...) asparagine glycosylation. The helical transmembrane segment at 26-46 (VLFVIFLSFYLFILPVNILII) threads the bilayer. Topologically, residues 47–57 (CTIRLDSHLSS) are cytoplasmic. Residues 58–78 (PMYFLLANLAFLDIWYSSITA) form a helical membrane-spanning segment. The Extracellular portion of the chain corresponds to 79–97 (PKMLVDFFVERKIISFGGC). C97 and C179 are oxidised to a cystine. Residues 98 to 118 (IAQLFFLHFVGASEMFLLTVM) form a helical membrane-spanning segment. Topologically, residues 119 to 142 (AFDRYAAICRPLHYATIMNRRLCC) are cytoplasmic. Residues 143 to 163 (ILVALSWTGGFVHSIIQVALI) form a helical membrane-spanning segment. Topologically, residues 164-204 (VRLPFCGPNELDNYFCDITQVVRIACANTFLEEMVMIFSSG) are extracellular. Residues 205–225 (LISVVCFIALLMSYAFLLTML) form a helical membrane-spanning segment. At 226–238 (KKHSSSGESTSRA) the chain is on the cytoplasmic side. Residues 239-259 (ISTCYSHITIVVLMFGPSIYI) form a helical membrane-spanning segment. The Extracellular portion of the chain corresponds to 260–270 (YARPFDSFSLD). A helical transmembrane segment spans residues 271 to 291 (KVVSVFHTVIFPLLNPIIYTL). The Cytoplasmic segment spans residues 292 to 313 (RNKEVKAAMRKLVNRYIFCKEK).

It belongs to the G-protein coupled receptor 1 family. In terms of tissue distribution, highly expressed in liver but not in adipose tissue. Also expressed at high level in testis.

It localises to the cell membrane. Its function is as follows. Olfactory receptor that acts as a receptor of Asprosin hormone at the surface of hepatocytes to promote hepatocyte glucose release. Also binds Asprosin in the arcuate nucleus of the hypothalamus, thereby stimulating appetite by promoting orexigenic AgRP neuronal activity. In testis, Asprosin-binding promotes sperm progressive motility and enhances male fertility. The activity of this receptor is mediated by G proteins which activate adenylyl cyclase, resulting in an elevation of intracellular cAMP. The chain is Olfactory receptor 4M1 from Mus musculus (Mouse).